We begin with the raw amino-acid sequence, 244 residues long: 5-oxoprolinase subunit A (244 aa).

It belongs to the LamB/PxpA family. As to quaternary structure, forms a complex composed of PxpA, PxpB and PxpC.

It carries out the reaction 5-oxo-L-proline + ATP + 2 H2O = L-glutamate + ADP + phosphate + H(+). In terms of biological role, catalyzes the cleavage of 5-oxoproline to form L-glutamate coupled to the hydrolysis of ATP to ADP and inorganic phosphate. In Salmonella paratyphi A (strain ATCC 9150 / SARB42), this protein is 5-oxoprolinase subunit A.